A 480-amino-acid polypeptide reads, in one-letter code: RuvB-like helicase 2 (480 aa).

Position 76-83 (76-83 (GPPSTGKT)) interacts with ATP.

The protein belongs to the RuvB family. May form heterododecamers with RVB1. Component of the SWR1 chromatin remodeling complex, the INO80 chromatin remodeling complex, and of the R2TP complex.

It localises to the nucleus. The enzyme catalyses ATP + H2O = ADP + phosphate + H(+). Its function is as follows. DNA helicase which participates in several chromatin remodeling complexes, including the SWR1 and the INO80 complexes. The SWR1 complex mediates the ATP-dependent exchange of histone H2A for the H2A variant HZT1 leading to transcriptional regulation of selected genes by chromatin remodeling. The INO80 complex remodels chromatin by shifting nucleosomes and is involved in DNA repair. Also involved in pre-rRNA processing. In Debaryomyces hansenii (strain ATCC 36239 / CBS 767 / BCRC 21394 / JCM 1990 / NBRC 0083 / IGC 2968) (Yeast), this protein is RuvB-like helicase 2 (RVB2).